The chain runs to 70 residues: Small ribosomal subunit protein bS18 (70 aa).

It belongs to the bacterial ribosomal protein bS18 family. Part of the 30S ribosomal subunit. Forms a tight heterodimer with protein bS6.

In terms of biological role, binds as a heterodimer with protein bS6 to the central domain of the 16S rRNA, where it helps stabilize the platform of the 30S subunit. This chain is Small ribosomal subunit protein bS18, found in Salinibacter ruber (strain DSM 13855 / M31).